Here is a 209-residue protein sequence, read N- to C-terminus: Virulence factors putative positive transcription regulator BvgA (209 aa).

One can recognise a Response regulatory domain in the interval 4–119 (KVLIIDDHPV…EVINAAKAVM (116 aa)). Asp-54 is subject to 4-aspartylphosphate. The HTH luxR-type domain maps to 142–207 (DSTLISVLSN…ELIDLAKRNN (66 aa)). The segment at residues 166 to 185 (NKDIADSMFLSNKTVSTYKT) is a DNA-binding region (H-T-H motif).

As to quaternary structure, homodimer. In terms of processing, phosphorylated by BvgS.

Member of the two-component regulatory system BvgS/BvgA. Activates the transcription of virulence genes. The polypeptide is Virulence factors putative positive transcription regulator BvgA (bvgA) (Bordetella bronchiseptica (strain ATCC BAA-588 / NCTC 13252 / RB50) (Alcaligenes bronchisepticus)).